Reading from the N-terminus, the 395-residue chain is Scyllo-inosose 3-dehydrogenase (395 aa).

C66 provides a ligand contact to Zn(2+). Active-site charge relay system residues include S68 and H71. Residues H95, E96, C131, C134, C137, C145, and E193 each coordinate Zn(2+). 3 residues coordinate NAD(+): I223, E243, and R248.

This sequence belongs to the zinc-containing alcohol dehydrogenase family. In terms of assembly, homodimer. The cofactor is Zn(2+).

The catalysed reaction is scyllo-inosose + NAD(+) = 3-dehydro-scyllo-inosose + NADH + H(+). Its pathway is polyol metabolism; myo-inositol metabolism. Catalyzes the NAD(+)-dependent oxidation of scyllo-inosose (2-keto-myo-inositol) to 3-dehydro-scyllo-inosose (diketo-inositol), and thus probably functions in a myo-inositol degradation pathway together with IolG, IolN and IolO. Has no activity on myo-inositol, D-chiro-inositol and 1-keto-D-chiro-inositol. In Thermotoga maritima (strain ATCC 43589 / DSM 3109 / JCM 10099 / NBRC 100826 / MSB8), this protein is Scyllo-inosose 3-dehydrogenase.